The sequence spans 532 residues: Vesicular acetylcholine transporter (532 aa).

Over 1–33 (MESAEPAGQARAAATKLSEAVGAALQEPRRQRR) the chain is Cytoplasmic. A helical membrane pass occupies residues 34–54 (LVLVIVCVALLLDNMLYMVIV). Residues 55 to 125 (PIVPDYIAHM…PTESEDVKIG (71 aa)) lie on the Lumenal, vesicle side of the membrane. N-linked (GlcNAc...) asparagine glycosylation is found at N89 and N96. The chain crosses the membrane as a helical span at residues 126–146 (VLFASKAILQLLVNPLSGPFI). At 147–152 (DRMSYD) the chain is on the cytoplasmic side. The helical transmembrane segment at 153-173 (VPLLIGLGVMFASTVLFAFAE) threads the bilayer. The Lumenal, vesicle portion of the chain corresponds to 174-182 (DYATLFAAR). Residues 183-203 (SLQGLGSAFADTSGIAMIADK) traverse the membrane as a helical segment. Over 204–213 (YPEEPERSRA) the chain is Cytoplasmic. Residues 214-234 (LGVALAFISFGSLVAPPFGGI) form a helical membrane-spanning segment. Residues 235-242 (LYEFAGKR) are Lumenal, vesicle-facing. A helical transmembrane segment spans residues 243–263 (VPFLVLAAVSLFDALLLLAVA). Over 264–289 (KPFSAAARARANLPVGTPIHRLMLDP) the chain is Cytoplasmic. The chain crosses the membrane as a helical span at residues 290-310 (YIAVVAGALTTCNIPLAFLEP). Residues 311 to 325 (TIATWMKHTMAASEW) lie on the Lumenal, vesicle side of the membrane. Residues 326-346 (EMGMAWLPAFVPHVLGVYLTV) form a helical membrane-spanning segment. At 347–356 (RLAARYPHLQ) the chain is on the cytoplasmic side. The helical transmembrane segment at 357-377 (WLYGALGLAVIGASSCIVPAC) threads the bilayer. Topologically, residues 378-388 (RSFAPLVVSLC) are lumenal, vesicle. The chain crosses the membrane as a helical span at residues 389 to 409 (GLCFGIALVDTALLPTLAFLV). Topologically, residues 410–422 (DVRHVSVYGSVYA) are cytoplasmic. The chain crosses the membrane as a helical span at residues 423–443 (IADISYSVAYALGPIVAGHIV). The Lumenal, vesicle segment spans residues 444 to 447 (HSLG). The chain crosses the membrane as a helical span at residues 448 to 468 (FEQLSLGMGLANLLYAPVLLL). The Cytoplasmic segment spans residues 469 to 532 (LRNVGLLTRS…DDYNYYYTRS (64 aa)). The tract at residues 471-532 (NVGLLTRSRS…DDYNYYYTRS (62 aa)) is mediates interaction with SEC14L1. The segment at 502-523 (RPVSGQDGEPRSPPGPFDACED) is disordered.

It belongs to the major facilitator superfamily. Vesicular transporter family. As to quaternary structure, interacts with SEC14L1. As to expression, peripheral and central cholinergic nervous systems.

It localises to the cytoplasmic vesicle. The protein resides in the secretory vesicle. The protein localises to the synaptic vesicle membrane. It catalyses the reaction acetylcholine(out) + 2 H(+)(in) = acetylcholine(in) + 2 H(+)(out). The enzyme catalyses choline(in) + 2 H(+)(out) = choline(out) + 2 H(+)(in). The catalysed reaction is serotonin(in) + 2 H(+)(out) = serotonin(out) + 2 H(+)(in). Potently inhibited by L-vesamicol, reserpine and tetrabenazine. Functionally, electrogenic antiporter that exchanges one cholinergic neurotransmitter, acetylcholine or choline, with two intravesicular protons across the membrane of synaptic vesicles. Uses the electrochemical proton gradient established by the V-type proton-pump ATPase to store neurotransmitters inside the vesicles prior to their release via exocytosis. Determines cholinergic vesicular quantal size at presynaptic nerve terminals in developing neuro-muscular junctions with an impact on motor neuron differentiation and innervation pattern. Part of forebrain cholinergic system, regulates hippocampal synapse transmissions that underlie spatial memory formation. Can transport serotonin. The sequence is that of Vesicular acetylcholine transporter (SLC18A3) from Homo sapiens (Human).